We begin with the raw amino-acid sequence, 471 residues long: MGKTLYQKLYDAHIVHQTPGETPLLYIDRHLVHEVTSPQAFDGLRAQRRRVRRPEHTFATMDHNVSTQSRDIHACGEMARVQMETLMANCREFGVQLYDLHHPHQGIVHVIGPEQGMTLPGSTIVCGDSHTATHGAFGALAFGIGTSEVEHVLATQTLKQDRARTMQVVIQGRCAEGISAKDIVLAVIGHLGHAGGTGYVVEFCGPAVEALSMEGRMTLCNMAIELGAKAGLIAPDETTFAYLQGRPFAPQGAQWQQAVDHWRTLRSDADARYDRTVTLQADDIAPQVTWGTNPGQVIAIDTPIPSPASLSDPIARASAHKALAYMDLQPGTRMSDVAIDRVFIGSCTNSRIEDLRAAAAVARGRRVAPGVQAMVVPGSGPVKAQAEAEGLDKIFTEAGFEWRLPGCSMCLAMNNDRLGSGERCASTSNRNFEGRQGRGGRTHLVSPAMAAAAAVCGHFADIRQFQEPAHD.

[4Fe-4S] cluster contacts are provided by cysteine 347, cysteine 407, and cysteine 410.

It belongs to the aconitase/IPM isomerase family. LeuC type 1 subfamily. In terms of assembly, heterodimer of LeuC and LeuD. It depends on [4Fe-4S] cluster as a cofactor.

The catalysed reaction is (2R,3S)-3-isopropylmalate = (2S)-2-isopropylmalate. It participates in amino-acid biosynthesis; L-leucine biosynthesis; L-leucine from 3-methyl-2-oxobutanoate: step 2/4. Functionally, catalyzes the isomerization between 2-isopropylmalate and 3-isopropylmalate, via the formation of 2-isopropylmaleate. The protein is 3-isopropylmalate dehydratase large subunit of Edwardsiella ictaluri (strain 93-146).